We begin with the raw amino-acid sequence, 126 residues long: RutC family protein SSO3206 (126 aa).

Belongs to the RutC family.

This chain is RutC family protein SSO3206, found in Saccharolobus solfataricus (strain ATCC 35092 / DSM 1617 / JCM 11322 / P2) (Sulfolobus solfataricus).